The following is a 557-amino-acid chain: Copine-6 (557 aa).

2 consecutive C2 domains span residues 2 to 127 (SDPE…TKPL) and 134 to 263 (TAGK…MQWD). 5 residues coordinate Ca(2+): aspartate 167, aspartate 173, aspartate 229, aspartate 231, and aspartate 237. The interval 244-303 (STFQEMQEGTANPGQEMQWDCINPKYRDKKKNYKSSGTVVLAQCTVEKVHTFLDYIMGGC) is linker region. Positions 306-526 (SFTVAIDFTA…ALAKRVLAEV (221 aa)) constitute a VWFA domain.

It belongs to the copine family. In terms of assembly, interacts (via second C2 domain) with OS9 (via C-terminus); this interaction occurs in a calcium-dependent manner in vitro. May interact with NECAB1. It depends on Ca(2+) as a cofactor.

It is found in the cytoplasm. It localises to the cell membrane. The protein resides in the endosome. Its subcellular location is the cytoplasmic vesicle. The protein localises to the clathrin-coated vesicle. It is found in the perikaryon. It localises to the cell projection. The protein resides in the dendrite. Functionally, calcium-dependent phospholipid-binding protein that plays a role in calcium-mediated intracellular processes. Binds phospholipid membranes in a calcium-dependent manner. Plays a role in dendrite formation by melanocytes. This Pongo abelii (Sumatran orangutan) protein is Copine-6.